Here is a 100-residue protein sequence, read N- to C-terminus: NADH-quinone oxidoreductase subunit K 1 (100 aa).

The next 3 helical transmembrane spans lie at 4 to 24 (LHSY…GVLV), 29 to 49 (IVIF…FIAL), and 60 to 80 (IFVF…LALM).

Belongs to the complex I subunit 4L family. NDH-1 is composed of 14 different subunits. Subunits NuoA, H, J, K, L, M, N constitute the membrane sector of the complex.

The protein resides in the cell inner membrane. The catalysed reaction is a quinone + NADH + 5 H(+)(in) = a quinol + NAD(+) + 4 H(+)(out). NDH-1 shuttles electrons from NADH, via FMN and iron-sulfur (Fe-S) centers, to quinones in the respiratory chain. The immediate electron acceptor for the enzyme in this species is believed to be ubiquinone. Couples the redox reaction to proton translocation (for every two electrons transferred, four hydrogen ions are translocated across the cytoplasmic membrane), and thus conserves the redox energy in a proton gradient. This is NADH-quinone oxidoreductase subunit K 1 from Geobacter sulfurreducens (strain ATCC 51573 / DSM 12127 / PCA).